The chain runs to 332 residues: Glycerol-3-phosphate dehydrogenase [NAD(P)+] (332 aa).

NADPH-binding residues include Ser10, Trp11, Lys31, and Lys105. Sn-glycerol 3-phosphate-binding residues include Lys105, Gly136, and Ser138. Ala140 is a binding site for NADPH. Residues Lys191, Asp244, Ser254, Arg255, and Asn256 each coordinate sn-glycerol 3-phosphate. Lys191 functions as the Proton acceptor in the catalytic mechanism. Residue Arg255 coordinates NADPH. Positions 279 and 281 each coordinate NADPH.

This sequence belongs to the NAD-dependent glycerol-3-phosphate dehydrogenase family.

It localises to the cytoplasm. It catalyses the reaction sn-glycerol 3-phosphate + NAD(+) = dihydroxyacetone phosphate + NADH + H(+). It carries out the reaction sn-glycerol 3-phosphate + NADP(+) = dihydroxyacetone phosphate + NADPH + H(+). It functions in the pathway membrane lipid metabolism; glycerophospholipid metabolism. In terms of biological role, catalyzes the reduction of the glycolytic intermediate dihydroxyacetone phosphate (DHAP) to sn-glycerol 3-phosphate (G3P), the key precursor for phospholipid synthesis. The polypeptide is Glycerol-3-phosphate dehydrogenase [NAD(P)+] (Anaeromyxobacter sp. (strain K)).